The following is a 428-amino-acid chain: Forkhead box protein B2 (428 aa).

The fork-head DNA-binding region spans 12–103 (QKPPYSYISL…GDMFENGSFL (92 aa)). Disordered regions lie at residues 118–217 (HLHS…MQEA) and 408–428 (PTAAGRADSKGSSLHSVLVHS). Residues 136–163 (LHPHHPHHAHHHHHHHHHAAHHHHHHHP) show a composition bias toward basic residues. Pro residues-rich tracts occupy residues 164–174 (PQPPPPPPPHM) and 183–192 (APAPQPPHLP). Residues 193–217 (SQPAQQPQPQSQPPQTSHPGKMQEA) are compositionally biased toward low complexity.

The protein resides in the nucleus. Its function is as follows. Transcription factor. This chain is Forkhead box protein B2 (Foxb2), found in Mus musculus (Mouse).